We begin with the raw amino-acid sequence, 158 residues long: Transcriptional repressor NrdR (158 aa).

Residues 3–34 (CPSCQNTDSRVLESRAADAGRSVRRRRECLHC) fold into a zinc finger. Residues 49–139 (ITVLKRNGNR…VYRHFRGIND (91 aa)) enclose the ATP-cone domain.

This sequence belongs to the NrdR family. Zn(2+) is required as a cofactor.

Functionally, negatively regulates transcription of bacterial ribonucleotide reductase nrd genes and operons by binding to NrdR-boxes. In Prochlorococcus marinus (strain MIT 9303), this protein is Transcriptional repressor NrdR.